A 650-amino-acid chain; its full sequence is Acetyl-coenzyme A synthetase (650 aa).

CoA-binding positions include 191–194 (RGGR), Thr-311, and Asn-335. Residues 387 to 389 (GEP), 411 to 416 (DTWWQT), Asp-501, and Arg-516 contribute to the ATP site. Residue Ser-524 participates in CoA binding. Position 527 (Arg-527) interacts with ATP. Val-538, His-540, and Ile-543 together coordinate Mg(2+). Position 585 (Arg-585) interacts with CoA. Lys-610 bears the N6-acetyllysine mark.

The protein belongs to the ATP-dependent AMP-binding enzyme family. It depends on Mg(2+) as a cofactor. Post-translationally, acetylated. Deacetylation by the SIR2-homolog deacetylase activates the enzyme.

The catalysed reaction is acetate + ATP + CoA = acetyl-CoA + AMP + diphosphate. Functionally, catalyzes the conversion of acetate into acetyl-CoA (AcCoA), an essential intermediate at the junction of anabolic and catabolic pathways. AcsA undergoes a two-step reaction. In the first half reaction, AcsA combines acetate with ATP to form acetyl-adenylate (AcAMP) intermediate. In the second half reaction, it can then transfer the acetyl group from AcAMP to the sulfhydryl group of CoA, forming the product AcCoA. In Vibrio parahaemolyticus serotype O3:K6 (strain RIMD 2210633), this protein is Acetyl-coenzyme A synthetase.